The following is a 513-amino-acid chain: ATP synthase subunit alpha (513 aa).

169-176 (GDRQTGKT) serves as a coordination point for ATP.

It belongs to the ATPase alpha/beta chains family. F-type ATPases have 2 components, CF(1) - the catalytic core - and CF(0) - the membrane proton channel. CF(1) has five subunits: alpha(3), beta(3), gamma(1), delta(1), epsilon(1). CF(0) has three main subunits: a(1), b(2) and c(9-12). The alpha and beta chains form an alternating ring which encloses part of the gamma chain. CF(1) is attached to CF(0) by a central stalk formed by the gamma and epsilon chains, while a peripheral stalk is formed by the delta and b chains.

It is found in the cell inner membrane. It carries out the reaction ATP + H2O + 4 H(+)(in) = ADP + phosphate + 5 H(+)(out). In terms of biological role, produces ATP from ADP in the presence of a proton gradient across the membrane. The alpha chain is a regulatory subunit. The sequence is that of ATP synthase subunit alpha from Proteus mirabilis (strain HI4320).